Consider the following 410-residue polypeptide: Testis-specific protein TEX28 (410 aa).

Residues 1–43 (MVLKAEHTRSPSATLPSNVPSCRSLSSSEDGPSGPSSLADGGL) are disordered. Polar residues predominate over residues 10–23 (SPSATLPSNVPSCR). A compositionally biased stretch (low complexity) spans 24–38 (SLSSSEDGPSGPSSL). A coiled-coil region spans residues 93-128 (QAFEKVNQRASATIAQIEHRLHQCHQQLQELEEGCR). The segment at 137-164 (ESDPANCEPPSEKALLSEPPEPGGEDGP) is disordered. The stretch at 185–245 (QGTCLETEDV…LLLESLQEEK (61 aa)) forms a coiled coil. The helical transmembrane segment at 336 to 358 (LSLATVLLVFVSTLCACPSSLIS) threads the bilayer.

Belongs to the TEX28 family. As to expression, testis specific.

The protein resides in the membrane. In Homo sapiens (Human), this protein is Testis-specific protein TEX28 (TEX28).